A 698-amino-acid chain; its full sequence is Gametogenetin-binding protein 2 (698 aa).

The segment at 555 to 575 (CMADPGNRETSGNTTHTEFHR) is disordered.

It is found in the cytoplasm. Its function is as follows. May be involved in spermatogenesis. This chain is Gametogenetin-binding protein 2 (GGNBP2), found in Gallus gallus (Chicken).